The sequence spans 89 residues: MNCLMLIFVVFLLAFGVECKKDDYPVDTAKRNCMLDCNVWDDEGYCDKFCKGRKADSGYCYKLKAACYCYGLPDDSPTKTSGRCNPNVR.

The first 19 residues, 1–19, serve as a signal peptide directing secretion; sequence MNCLMLIFVVFLLAFGVEC. In terms of domain architecture, LCN-type CS-alpha/beta spans 21 to 85; that stretch reads KDDYPVDTAK…SPTKTSGRCN (65 aa). Cystine bridges form between cysteine 33-cysteine 84, cysteine 37-cysteine 60, cysteine 46-cysteine 67, and cysteine 50-cysteine 69.

Expressed by the venom gland.

The protein resides in the secreted. Its function is as follows. Inhibits voltage-gated sodium channels (Nav). The chain is Toxin To14 from Tityus obscurus (Amazonian scorpion).